The sequence spans 465 residues: Alpha-galacturonidase (465 aa).

11 to 78 is an NAD(+) binding site; that stretch reads ITIAYIGGGS…GKWLYKACET (68 aa). Asn157 contributes to the substrate binding site. Cys179 is a binding site for Mn(2+). Catalysis depends on His180, which acts as the Proton donor. Position 216 (His216) interacts with Mn(2+).

Belongs to the glycosyl hydrolase 4 family. In terms of assembly, homotetramer. It depends on NAD(+) as a cofactor. Mn(2+) is required as a cofactor.

It carries out the reaction [(1-&gt;4)-alpha-D-galacturonosyl](n) + H2O = alpha-D-galacturonate + [(1-&gt;4)-alpha-D-galacturonosyl](n-1). In terms of biological role, alpha-galacturonidase able to catalyze the hydrolysis of the chromogenic substrate p-nitrophenyl-alpha-D-galacturonic acid (pNPalphaGalUA). It is probable that alpha-1,4-di-galacturonate (GalUA(2)) is the naturally occurring substrate. In Thermoanaerobacterium saccharolyticum (strain DSM 8691 / JW/SL-YS485), this protein is Alpha-galacturonidase.